We begin with the raw amino-acid sequence, 272 residues long: HMP-PP phosphatase (272 aa).

Aspartate 8 functions as the Nucleophile in the catalytic mechanism. Residues aspartate 8, aspartate 10, and aspartate 212 each contribute to the Mg(2+) site.

It belongs to the HAD-like hydrolase superfamily. Cof family. Requires Mg(2+) as cofactor.

The enzyme catalyses 4-amino-2-methyl-5-(diphosphooxymethyl)pyrimidine + H2O = 4-amino-2-methyl-5-(phosphooxymethyl)pyrimidine + phosphate + H(+). In terms of biological role, catalyzes the hydrolysis of 4-amino-2-methyl-5-hydroxymethylpyrimidine pyrophosphate (HMP-PP) to 4-amino-2-methyl-5-hydroxymethylpyrimidine phosphate (HMP-P). This Escherichia coli O157:H7 protein is HMP-PP phosphatase.